Reading from the N-terminus, the 180-residue chain is Acireductone dioxygenase (180 aa).

4 residues coordinate Fe(2+): H97, H99, E103, and H141. Positions 97, 99, 103, and 141 each coordinate Ni(2+).

This sequence belongs to the acireductone dioxygenase (ARD) family. As to quaternary structure, monomer. Fe(2+) is required as a cofactor. Ni(2+) serves as cofactor.

It catalyses the reaction 1,2-dihydroxy-5-(methylsulfanyl)pent-1-en-3-one + O2 = 3-(methylsulfanyl)propanoate + CO + formate + 2 H(+). It carries out the reaction 1,2-dihydroxy-5-(methylsulfanyl)pent-1-en-3-one + O2 = 4-methylsulfanyl-2-oxobutanoate + formate + 2 H(+). It functions in the pathway amino-acid biosynthesis; L-methionine biosynthesis via salvage pathway; L-methionine from S-methyl-5-thio-alpha-D-ribose 1-phosphate: step 5/6. Catalyzes 2 different reactions between oxygen and the acireductone 1,2-dihydroxy-3-keto-5-methylthiopentene (DHK-MTPene) depending upon the metal bound in the active site. Fe-containing acireductone dioxygenase (Fe-ARD) produces formate and 2-keto-4-methylthiobutyrate (KMTB), the alpha-ketoacid precursor of methionine in the methionine recycle pathway. Ni-containing acireductone dioxygenase (Ni-ARD) produces methylthiopropionate, carbon monoxide and formate, and does not lie on the methionine recycle pathway. The sequence is that of Acireductone dioxygenase from Yersinia pseudotuberculosis serotype O:1b (strain IP 31758).